We begin with the raw amino-acid sequence, 31 residues long: Photosystem II reaction center protein T (31 aa).

The helical transmembrane segment at alanine 3–phenylalanine 23 threads the bilayer.

This sequence belongs to the PsbT family. PSII is composed of 1 copy each of membrane proteins PsbA, PsbB, PsbC, PsbD, PsbE, PsbF, PsbH, PsbI, PsbJ, PsbK, PsbL, PsbM, PsbT, PsbX, PsbY, PsbZ, Psb30/Ycf12, at least 3 peripheral proteins of the oxygen-evolving complex and a large number of cofactors. It forms dimeric complexes.

The protein resides in the plastid. It localises to the chloroplast thylakoid membrane. Functionally, found at the monomer-monomer interface of the photosystem II (PS II) dimer, plays a role in assembly and dimerization of PSII. PSII is a light-driven water plastoquinone oxidoreductase, using light energy to abstract electrons from H(2)O, generating a proton gradient subsequently used for ATP formation. The polypeptide is Photosystem II reaction center protein T (Pyropia yezoensis (Susabi-nori)).